Consider the following 891-residue polypeptide: Probable serine/threonine-protein kinase mkcC (891 aa).

Disordered regions lie at residues 24 to 70 (IELN…TATI), 85 to 121 (ANNN…APSS), 264 to 435 (DDPQ…AREK), 495 to 526 (NSLG…PEVS), and 565 to 588 (TTAS…DDYD). Positions 29–41 (QEEQQQPEQQEQP) are enriched in low complexity. A compositionally biased stretch (basic and acidic residues) spans 45–58 (EELKDNNEKIKTSE). Composition is skewed to low complexity over residues 61-70 (TTTTTTTATI), 86-105 (NNNT…LNNN), 297-314 (STSN…TTGK), 322-360 (SNSS…SGTS), and 379-397 (TTGN…TTSS). Positions 422-432 (RKRKEQKRSRA) are enriched in basic residues. Low complexity predominate over residues 495–522 (NSLGSSINKNNSNNTTTTTTTTNTNNKS). The Protein kinase domain maps to 616-864 (YKNLKQIGSG…AEQLLKHPWI (249 aa)). Residues 622–630 (IGSGGFGSV) and Lys645 contribute to the ATP site. The active-site Proton acceptor is the Asp735.

Belongs to the protein kinase superfamily. STE Ser/Thr protein kinase family. STE20 subfamily. Mg(2+) is required as a cofactor.

The catalysed reaction is L-seryl-[protein] + ATP = O-phospho-L-seryl-[protein] + ADP + H(+). It catalyses the reaction L-threonyl-[protein] + ATP = O-phospho-L-threonyl-[protein] + ADP + H(+). The sequence is that of Probable serine/threonine-protein kinase mkcC from Dictyostelium discoideum (Social amoeba).